A 315-amino-acid chain; its full sequence is Phosphomutase-like protein 3 (315 aa).

The N-terminal stretch at 1 to 19 (MQQFLTLGALWTLFNVATT) is a signal peptide. Catalysis depends on His77, which acts as the Tele-phosphohistidine intermediate. 2 N-linked (GlcNAc...) asparagine glycosylation sites follow: Asn88 and Asn154. Glu173 acts as the Proton donor/acceptor in catalysis. An N-linked (GlcNAc...) asparagine glycan is attached at Asn185. Asn286 carries the GPI-anchor amidated asparagine lipid modification. Residues 287-315 (DAWDTFKDWCPNPPASISGTATSTATGSA) constitute a propeptide, removed in mature form.

The protein belongs to the phosphoglycerate mutase family.

It localises to the cell membrane. In Candida albicans (strain SC5314 / ATCC MYA-2876) (Yeast), this protein is Phosphomutase-like protein 3 (PGA12).